A 220-amino-acid polypeptide reads, in one-letter code: Ribonuclease HII (220 aa).

The 219-residue stretch at M1 to K219 folds into the RNase H type-2 domain. 3 residues coordinate a divalent metal cation: D7, E8, and D105.

The protein belongs to the RNase HII family. Mn(2+) serves as cofactor. It depends on Mg(2+) as a cofactor.

Its subcellular location is the cytoplasm. The enzyme catalyses Endonucleolytic cleavage to 5'-phosphomonoester.. Functionally, endonuclease that specifically degrades the RNA of RNA-DNA hybrids. The sequence is that of Ribonuclease HII from Methanosarcina mazei (strain ATCC BAA-159 / DSM 3647 / Goe1 / Go1 / JCM 11833 / OCM 88) (Methanosarcina frisia).